The following is a 222-amino-acid chain: Dihydrophenazinedicarboxylate synthase (222 aa).

Serine 18 provides a ligand contact to substrate. FMN-binding positions include 73–76 and 88–89; these read RIVV and ST. Histidine 90 is a substrate binding site. FMN-binding positions include 94–95 and glutamine 117; that span reads QK. 2 residues coordinate substrate: arginine 139 and serine 147. FMN contacts are provided by residues 152 to 153 and arginine 205; that span reads QS.

Belongs to the pyridoxamine 5'-phosphate oxidase family. It depends on FMN as a cofactor.

It catalyses the reaction (1R,6R)-1,4,5,5a,6,9-hexahydrophenazine-1,6-dicarboxylate + O2 = (1R,10aS)-1,4,10,10a-tetrahydrophenazine-1,6-dicarboxylate + H2O2. The enzyme catalyses (1R,10aS)-1,4,10,10a-tetrahydrophenazine-1,6-dicarboxylate + O2 = (5aS)-5,5a-dihydrophenazine-1,6-dicarboxylate + H2O2. It carries out the reaction (1R,10aS)-1,4,10,10a-tetrahydrophenazine-1-carboxylate + O2 = (10aS)-10,10a-dihydrophenazine-1-carboxylate + H2O2. The catalysed reaction is (1R)-1,4,5,10-tetrahydrophenazine-1-carboxylate + O2 = (10aS)-10,10a-dihydrophenazine-1-carboxylate + H2O2. Its pathway is antibiotic biosynthesis; phenazine biosynthesis. Functionally, involved in the biosynthesis of the antibiotic phenazine, a nitrogen-containing heterocyclic molecule having important roles in virulence, competition and biological control. Catalyzes several oxidations in the terminal steps of core phenazine biosynthesis. It oxidizes both hexahydrophenazine-1,6-dicarboxylic acid (HHPDC) and tetrahydrophenazine-1-carboxylic acid (THPCA) and thereby contributes to the generation of both phenazine-1,6-dicarboxylic acid (PDC) and phenazine-1-carboxylic acid (PCA). The sequence is that of Dihydrophenazinedicarboxylate synthase from Pseudomonas chlororaphis (Pseudomonas aureofaciens).